The following is a 221-amino-acid chain: Molybdenum cofactor guanylyltransferase (221 aa).

GTP is bound by residues 18–20 (IAG), lysine 35, asparagine 63, aspartate 81, and aspartate 112. Aspartate 112 lines the Mg(2+) pocket.

This sequence belongs to the MobA family. Monomer. Mg(2+) is required as a cofactor.

It is found in the cytoplasm. It catalyses the reaction Mo-molybdopterin + GTP + H(+) = Mo-molybdopterin guanine dinucleotide + diphosphate. Transfers a GMP moiety from GTP to Mo-molybdopterin (Mo-MPT) cofactor (Moco or molybdenum cofactor) to form Mo-molybdopterin guanine dinucleotide (Mo-MGD) cofactor. The polypeptide is Molybdenum cofactor guanylyltransferase (Brucella melitensis biotype 2 (strain ATCC 23457)).